The following is a 148-amino-acid chain: Lysozyme C (148 aa).

Residues 1 to 18 (MKAVIILGLVLLSVTVQG) form the signal peptide. A C-type lysozyme domain is found at 19 to 148 (KIFERCELAR…VSQYVQGCGV (130 aa)). Disulfide bonds link Cys24-Cys146, Cys48-Cys134, Cys83-Cys99, and Cys95-Cys113. Residues Glu53 and Asp71 contribute to the active site.

It belongs to the glycosyl hydrolase 22 family. Monomer.

The catalysed reaction is Hydrolysis of (1-&gt;4)-beta-linkages between N-acetylmuramic acid and N-acetyl-D-glucosamine residues in a peptidoglycan and between N-acetyl-D-glucosamine residues in chitodextrins.. Its function is as follows. Lysozymes have primarily a bacteriolytic function; those in tissues and body fluids are associated with the monocyte-macrophage system and enhance the activity of immunoagents. In Erythrocebus patas (Red guenon), this protein is Lysozyme C (LYZ).